The primary structure comprises 207 residues: Cytochrome c oxidase subunit 3 (207 aa).

5 consecutive transmembrane segments (helical) span residues 30-50 (FWLF…TFLA), 67-87 (VTLV…SVYA), 101-121 (LWLG…IYEF), 144-164 (LVGT…TLMI), and 186-206 (WHFI…MGMV).

The protein belongs to the cytochrome c oxidase subunit 3 family.

Its subcellular location is the cell membrane. The catalysed reaction is 4 Fe(II)-[cytochrome c] + O2 + 8 H(+)(in) = 4 Fe(III)-[cytochrome c] + 2 H2O + 4 H(+)(out). This chain is Cytochrome c oxidase subunit 3 (ctaE), found in Bacillus subtilis (strain 168).